The primary structure comprises 567 residues: Type 2 DNA topoisomerase 6 subunit B (567 aa).

Residues Asn46, Asp78, 99-100, 109-116, and Lys472 each bind ATP; these read TK and GQQGIGIS.

It belongs to the TOP6B family. As to quaternary structure, homodimer. Heterotetramer of two Top6A and two Top6B chains.

The catalysed reaction is ATP-dependent breakage, passage and rejoining of double-stranded DNA.. Its function is as follows. Relaxes both positive and negative superturns and exhibits a strong decatenase activity. In Thermococcus kodakarensis (strain ATCC BAA-918 / JCM 12380 / KOD1) (Pyrococcus kodakaraensis (strain KOD1)), this protein is Type 2 DNA topoisomerase 6 subunit B.